A 234-amino-acid polypeptide reads, in one-letter code: Cyclo(L-leucyl-L-leucyl) synthase (234 aa).

The Nucleophile role is filled by S33. Substrate is bound by residues N36, 179–183, Y203, and 208–209; these read YIFAE and SI.

The protein belongs to the CDPS family.

The enzyme catalyses 2 L-leucyl-tRNA(Leu) = cyclo(L-leucyl-L-leucyl) + 2 tRNA(Leu) + 2 H(+). It uses activated amino acids in the form of aminoacyl-tRNAs (aa-tRNAs) as substrates to catalyze the ATP-independent formation of cyclodipeptides which are intermediates in diketopiperazine (DKP) biosynthetic pathways. Catalyzes the formation of cyclo(L-Leu-L-Leu) (cLL) from L-leucyl-tRNA(Leu). Can incorporate various nonpolar residues, such as L-phenylalanine, L-leucine and L-methionine, into cyclodipeptides. This chain is Cyclo(L-leucyl-L-leucyl) synthase, found in Photorhabdus laumondii subsp. laumondii (strain DSM 15139 / CIP 105565 / TT01) (Photorhabdus luminescens subsp. laumondii).